The sequence spans 385 residues: Acetate kinase (385 aa).

A Mg(2+)-binding site is contributed by Asn-9. Position 16 (Lys-16) interacts with ATP. Arg-87 is a binding site for substrate. The Proton donor/acceptor role is filled by Asp-144. ATP contacts are provided by residues 202 to 206 (HLGSG) and 277 to 279 (DIR). A Mg(2+)-binding site is contributed by Glu-373.

This sequence belongs to the acetokinase family. In terms of assembly, homodimer. It depends on Mg(2+) as a cofactor. The cofactor is Mn(2+).

It is found in the cytoplasm. It catalyses the reaction acetate + ATP = acetyl phosphate + ADP. It participates in metabolic intermediate biosynthesis; acetyl-CoA biosynthesis; acetyl-CoA from acetate: step 1/2. Its function is as follows. Catalyzes the formation of acetyl phosphate from acetate and ATP. Can also catalyze the reverse reaction. In Rickettsia akari (strain Hartford), this protein is Acetate kinase.